We begin with the raw amino-acid sequence, 572 residues long: Formate--tetrahydrofolate ligase (572 aa).

65–72 (TPLGEGKT) is a binding site for ATP.

This sequence belongs to the formate--tetrahydrofolate ligase family.

The enzyme catalyses (6S)-5,6,7,8-tetrahydrofolate + formate + ATP = (6R)-10-formyltetrahydrofolate + ADP + phosphate. Its pathway is one-carbon metabolism; tetrahydrofolate interconversion. The sequence is that of Formate--tetrahydrofolate ligase from Chloroflexus aggregans (strain MD-66 / DSM 9485).